A 232-amino-acid chain; its full sequence is MLSVRNLVHRYGDTVAVDGVSLDVADGECVVVTGANGSGKTTLVRHCNGLLEPDDGEVLVNGTPVGEDLVAARASVGMVFQNPRDGFVGATVGADVAFGPENLGRPREEIDARVADALDAVELGGRRDERVADLSGGEQERVAIAAALAMRPDHLVLDEPFTGLDWPARQSVLDRLRALHAAGTSLIVVTHDLRDVWTLADRVVAMRDGEIALRGDPADVRGALPDAGVRPP.

The 230-residue stretch at 2–231 (LSVRNLVHRY…GALPDAGVRP (230 aa)) folds into the ABC transporter domain. 34 to 41 (GANGSGKT) provides a ligand contact to ATP.

Belongs to the ABC transporter superfamily.

The protein resides in the cell membrane. In terms of biological role, probably part of an ABC transporter complex. Responsible for energy coupling to the transport system. The protein is Putative ABC transporter ATP-binding protein VNG_2317G of Halobacterium salinarum (strain ATCC 700922 / JCM 11081 / NRC-1) (Halobacterium halobium).